Consider the following 431-residue polypeptide: MGGSDENRHGVIGPMNRQQGGLRGGKVIPTNGQTRRALSNINKNIIGAPVYPCAVKRPFTEKNGICNKKIPPVPVHRPVTRKFAAQLAENNLQIHKEETKKPDLISNEALDRIITDVEEGDFNEPMFVQHTEAMLEEIDKMEGIEMQDSNDIDAEVEESVMDIDSCDKNNPLSVVEYINDIYCFYKKNECRSCVPPNYMENQHDINERMRGILFDWLIEVHYKFELMEETLYLTINLIDRFLAVHQHIARKKLQLVGVTAMLLACKYEEVSVPVVDDLILISDKAYTRTEILDMEKLMANTLQFNFCLPTPYVFMRRFLKAAQSDKKLELLSFFMIELCLVEYEMLQYTPSQLAASAIYTAQSTLKGYEDWSKTSEFHSGYTEEALLECSRKMVGLHHKAGTGKLTGVHRKYNTSKFGYAARIEPAGFLLL.

Residues M1–T30 are disordered.

Belongs to the cyclin family. Cyclin AB subfamily. As to quaternary structure, interacts with SMR11.

This chain is Cyclin-B2-4 (CYCB2-4), found in Arabidopsis thaliana (Mouse-ear cress).